Here is a 337-residue protein sequence, read N- to C-terminus: Junctional sarcoplasmic reticulum protein 1 (337 aa).

The mediates interaction with CACNA1S stretch occupies residues 1 to 84 (MATRAMEELD…EKEPVSKVTS (84 aa)). Disordered regions lie at residues 23–125 (SALA…ELPW) and 159–337 (EAPA…KGRD). Basic and acidic residues-rich tracts occupy residues 49–59 (SRSHDSQERVT) and 69–79 (TKPKKMEKEPV). Residues 165–180 (PESWASSSSSPKGPAS) show a composition bias toward low complexity. Residues 199–213 (SKLEERVQIPRSEEA) are compositionally biased toward basic and acidic residues. Residues 214-225 (AEKDEWESEEAA) show a composition bias toward acidic residues. 3 stretches are compositionally biased toward basic and acidic residues: residues 236–277 (GPKE…RGAR), 285–309 (RRWE…DRKR), and 316–325 (RRPDEEDRPL). Over residues 326–337 (GRQKRRAGKGRD) the composition is skewed to basic residues.

In terms of assembly, interacts with CACNA1S, CACNB1 and calsequestrin.

The protein resides in the sarcoplasmic reticulum membrane. It localises to the endoplasmic reticulum membrane. Functionally, involved in skeletal muscle excitation/contraction coupling (EC), probably acting as a regulator of the voltage-sensitive calcium channel CACNA1S. EC is a physiological process whereby an electrical signal (depolarization of the plasma membrane) is converted into a chemical signal, a calcium gradient, by the opening of ryanodine receptor calcium release channels. May regulate CACNA1S membrane targeting and activity. The protein is Junctional sarcoplasmic reticulum protein 1 (JSRP1) of Bos taurus (Bovine).